Here is a 271-residue protein sequence, read N- to C-terminus: tRNA (guanine-N(7)-)-methyltransferase (271 aa).

The tract at residues 1–52 (MSDSHHTPEAASASLRHVRAKGEPRFPDGPKADPAGSHFERRIRSFQPRRSR) is disordered. The span at 20–31 (AKGEPRFPDGPK) shows a compositional bias: basic and acidic residues. S-adenosyl-L-methionine-binding residues include Glu93, Asp118, Asp145, and Asp168. Residue Asp168 is part of the active site. Substrate contacts are provided by residues Lys172, Asp204, and 241–244 (TRFE).

The protein belongs to the class I-like SAM-binding methyltransferase superfamily. TrmB family.

The enzyme catalyses guanosine(46) in tRNA + S-adenosyl-L-methionine = N(7)-methylguanosine(46) in tRNA + S-adenosyl-L-homocysteine. The protein operates within tRNA modification; N(7)-methylguanine-tRNA biosynthesis. Its function is as follows. Catalyzes the formation of N(7)-methylguanine at position 46 (m7G46) in tRNA. The polypeptide is tRNA (guanine-N(7)-)-methyltransferase (Streptomyces coelicolor (strain ATCC BAA-471 / A3(2) / M145)).